A 341-amino-acid polypeptide reads, in one-letter code: Formimidoylglutamase (341 aa).

6 residues coordinate Mn(2+): His-133, Asp-162, His-164, Asp-166, Cys-253, and Asp-255.

Belongs to the arginase family. The cofactor is Mn(2+).

It carries out the reaction N-formimidoyl-L-glutamate + H2O = formamide + L-glutamate. It functions in the pathway amino-acid degradation; L-histidine degradation into L-glutamate; L-glutamate from N-formimidoyl-L-glutamate (hydrolase route): step 1/1. Catalyzes the conversion of N-formimidoyl-L-glutamate to L-glutamate and formamide. In Aromatoleum aromaticum (strain DSM 19018 / LMG 30748 / EbN1) (Azoarcus sp. (strain EbN1)), this protein is Formimidoylglutamase.